The primary structure comprises 476 residues: Bifunctional protein HldE (476 aa).

The interval 1-318 is ribokinase; it reads MAQYSAEFKQ…ENAIHARPET (318 aa). Residue 195–198 participates in ATP binding; it reads NMSE. Aspartate 264 is a catalytic residue. The tract at residues 344–476 is cytidylyltransferase; that stretch reads MTNGCFDILH…VIEKIKLLKD (133 aa).

It in the N-terminal section; belongs to the carbohydrate kinase PfkB family. In the C-terminal section; belongs to the cytidylyltransferase family. In terms of assembly, homodimer.

It catalyses the reaction D-glycero-beta-D-manno-heptose 7-phosphate + ATP = D-glycero-beta-D-manno-heptose 1,7-bisphosphate + ADP + H(+). The enzyme catalyses D-glycero-beta-D-manno-heptose 1-phosphate + ATP + H(+) = ADP-D-glycero-beta-D-manno-heptose + diphosphate. It functions in the pathway nucleotide-sugar biosynthesis; ADP-L-glycero-beta-D-manno-heptose biosynthesis; ADP-L-glycero-beta-D-manno-heptose from D-glycero-beta-D-manno-heptose 7-phosphate: step 1/4. It participates in nucleotide-sugar biosynthesis; ADP-L-glycero-beta-D-manno-heptose biosynthesis; ADP-L-glycero-beta-D-manno-heptose from D-glycero-beta-D-manno-heptose 7-phosphate: step 3/4. Its function is as follows. Catalyzes the phosphorylation of D-glycero-D-manno-heptose 7-phosphate at the C-1 position to selectively form D-glycero-beta-D-manno-heptose-1,7-bisphosphate. In terms of biological role, catalyzes the ADP transfer from ATP to D-glycero-beta-D-manno-heptose 1-phosphate, yielding ADP-D-glycero-beta-D-manno-heptose. This Haemophilus influenzae (strain PittGG) protein is Bifunctional protein HldE.